The chain runs to 372 residues: Cell division protein FtsZ 1 (372 aa).

Residues 51–55 (GAGCN), 138–140 (GTG), Glu169, Arg173, and Asp216 contribute to the GTP site. A compositionally biased stretch (acidic residues) spans 350-360 (PEEETPLETPE). Residues 350–372 (PEEETPLETPEESPSIEISIPEL) form a disordered region. Positions 361–372 (ESPSIEISIPEL) are enriched in low complexity.

The protein belongs to the FtsZ family. As to quaternary structure, homodimer. Polymerizes to form a dynamic ring structure in a strictly GTP-dependent manner. Interacts directly with several other division proteins.

Its subcellular location is the cytoplasm. Essential cell division protein that forms a contractile ring structure (Z ring) at the future cell division site. The regulation of the ring assembly controls the timing and the location of cell division. One of the functions of the FtsZ ring is to recruit other cell division proteins to the septum to produce a new cell wall between the dividing cells. Binds GTP and shows GTPase activity. The protein is Cell division protein FtsZ 1 of Pyrococcus furiosus (strain ATCC 43587 / DSM 3638 / JCM 8422 / Vc1).